The chain runs to 351 residues: MSILLIDLSSQELRQEEIELLEHPLVAGLILFSRNFYDIEQIRHLIRSVRQKVKKPLLITVDQEGGRVQRFRQGFTQLPAMQSFACLLSDPQEQQEMAWRAGWQMAAEMTALDIDLSFAPVLDLGHQCKAIGDRSFHYEEKKLIELAEKFIQGMRQIGMSATGKHFPGHGHVLADSHLETPYDDRAKELIFAQDIRPFQSLIKQGLLDAVMPAHVIYTQCDNQPASGSSYWLKEVLRQQLGFQGAIFSDDLGMKGAGFMGDFVARCTQSLQAGCDLLLLCNEPEAVVQVLDRFKPQESQNKRIIRQTRLNKLFKKQRIDWQTLRNQRDWLENHKKLTALQQDWLAYKGYDN.

Residues Asp62, Arg70, Arg134, and 164–165 (KH) each bind substrate. Catalysis depends on His177, which acts as the Proton donor/acceptor. Asp249 (nucleophile) is an active-site residue.

This sequence belongs to the glycosyl hydrolase 3 family. NagZ subfamily.

Its subcellular location is the cytoplasm. It catalyses the reaction Hydrolysis of terminal non-reducing N-acetyl-D-hexosamine residues in N-acetyl-beta-D-hexosaminides.. It participates in cell wall biogenesis; peptidoglycan recycling. Functionally, plays a role in peptidoglycan recycling by cleaving the terminal beta-1,4-linked N-acetylglucosamine (GlcNAc) from peptide-linked peptidoglycan fragments, giving rise to free GlcNAc, anhydro-N-acetylmuramic acid and anhydro-N-acetylmuramic acid-linked peptides. The sequence is that of Beta-hexosaminidase from Histophilus somni (strain 129Pt) (Haemophilus somnus).